Here is a 250-residue protein sequence, read N- to C-terminus: N-acetylmuramoyl-L-alanine amidase CwlH (250 aa).

Residues 1 to 44 (MVTIKKDFIPVSNDNRPGYAMAPAYITVHNTANTAKGADAKMHA) form the signal peptide. In terms of domain architecture, N-acetylmuramoyl-L-alanine amidase spans 45-141 (KFVKNPNTSE…KKWSGKECPR (97 aa)).

The protein belongs to the N-acetylmuramoyl-L-alanine amidase 2 family.

The protein resides in the secreted. It catalyses the reaction Hydrolyzes the link between N-acetylmuramoyl residues and L-amino acid residues in certain cell-wall glycopeptides.. Its function is as follows. Autolysins are involved in some important biological processes such as cell separation, cell-wall turnover, competence for genetic transformation, formation of the flagella and sporulation. Could play a role in mother cell lysis with CwlC. The protein is N-acetylmuramoyl-L-alanine amidase CwlH (cwlH) of Bacillus subtilis (strain 168).